Reading from the N-terminus, the 107-residue chain is Large ribosomal subunit protein eL33B (107 aa).

An N-acetylalanine; partial modification is found at alanine 2. Residue lysine 47 forms a Glycyl lysine isopeptide (Lys-Gly) (interchain with G-Cter in ubiquitin) linkage.

The protein belongs to the eukaryotic ribosomal protein eL33 family. As to quaternary structure, component of the large ribosomal subunit (LSU). Mature yeast ribosomes consist of a small (40S) and a large (60S) subunit. The 40S small subunit contains 1 molecule of ribosomal RNA (18S rRNA) and 33 different proteins (encoded by 57 genes). The large 60S subunit contains 3 rRNA molecules (25S, 5.8S and 5S rRNA) and 46 different proteins (encoded by 81 genes). In terms of processing, N-terminally acetylated by acetyltransferase NatA.

The protein localises to the cytoplasm. In terms of biological role, component of the ribosome, a large ribonucleoprotein complex responsible for the synthesis of proteins in the cell. The small ribosomal subunit (SSU) binds messenger RNAs (mRNAs) and translates the encoded message by selecting cognate aminoacyl-transfer RNA (tRNA) molecules. The large subunit (LSU) contains the ribosomal catalytic site termed the peptidyl transferase center (PTC), which catalyzes the formation of peptide bonds, thereby polymerizing the amino acids delivered by tRNAs into a polypeptide chain. The nascent polypeptides leave the ribosome through a tunnel in the LSU and interact with protein factors that function in enzymatic processing, targeting, and the membrane insertion of nascent chains at the exit of the ribosomal tunnel. The protein is Large ribosomal subunit protein eL33B of Saccharomyces cerevisiae (strain ATCC 204508 / S288c) (Baker's yeast).